We begin with the raw amino-acid sequence, 183 residues long: uncharacterized protein (183 aa).

It belongs to the isochorismatase family.

This is an uncharacterized protein from Bacillus subtilis (strain 168).